The following is an 81-amino-acid chain: uncharacterized protein (81 aa).

One can recognise a SpoVT-AbrB domain in the interval methionine 1–threonine 45.

It to B.subtilis SpoVT.

This is an uncharacterized protein from Mycobacterium bovis (strain ATCC BAA-935 / AF2122/97).